The sequence spans 501 residues: Bifunctional purine biosynthesis protein PurH (501 aa).

In terms of domain architecture, MGS-like spans 1–144; that stretch reads MKKRALISVF…KNFKDVVVLS (144 aa).

It belongs to the PurH family.

The enzyme catalyses (6R)-10-formyltetrahydrofolate + 5-amino-1-(5-phospho-beta-D-ribosyl)imidazole-4-carboxamide = 5-formamido-1-(5-phospho-D-ribosyl)imidazole-4-carboxamide + (6S)-5,6,7,8-tetrahydrofolate. It carries out the reaction IMP + H2O = 5-formamido-1-(5-phospho-D-ribosyl)imidazole-4-carboxamide. It participates in purine metabolism; IMP biosynthesis via de novo pathway; 5-formamido-1-(5-phospho-D-ribosyl)imidazole-4-carboxamide from 5-amino-1-(5-phospho-D-ribosyl)imidazole-4-carboxamide (10-formyl THF route): step 1/1. The protein operates within purine metabolism; IMP biosynthesis via de novo pathway; IMP from 5-formamido-1-(5-phospho-D-ribosyl)imidazole-4-carboxamide: step 1/1. The protein is Bifunctional purine biosynthesis protein PurH of Clostridium perfringens (strain 13 / Type A).